The chain runs to 743 residues: GTPase-activating protein gyp7 (743 aa).

One can recognise a Rab-GAP TBC domain in the interval 411–633 (GIQPSLRKEV…KLWDVLFTNY (223 aa)).

It is found in the cytoplasm. It localises to the nucleus. In terms of biological role, most effectively accelerates the intrinsic GTPase activity of ypt7. This is GTPase-activating protein gyp7 from Schizosaccharomyces pombe (strain 972 / ATCC 24843) (Fission yeast).